The sequence spans 364 residues: Flagellar P-ring protein (364 aa).

The first 21 residues, 1 to 21 (MNVFKVFCLMVLLGWQLPAMA), serve as a signal peptide directing secretion.

It belongs to the FlgI family. As to quaternary structure, the basal body constitutes a major portion of the flagellar organelle and consists of four rings (L,P,S, and M) mounted on a central rod.

The protein resides in the periplasm. The protein localises to the bacterial flagellum basal body. In terms of biological role, assembles around the rod to form the L-ring and probably protects the motor/basal body from shearing forces during rotation. This is Flagellar P-ring protein from Pseudoalteromonas translucida (strain TAC 125).